We begin with the raw amino-acid sequence, 207 residues long: Low-molecular weight cobalt-containing nitrile hydratase subunit alpha (207 aa).

The Co(3+) site is built by C109, C112, S113, and C114.

It belongs to the nitrile hydratase subunit alpha family. As to quaternary structure, heterodimer of an alpha and a beta chain. Co(3+) serves as cofactor.

It catalyses the reaction an aliphatic primary amide = an aliphatic nitrile + H2O. Its function is as follows. NHase catalyzes the hydration of various nitrile compounds to the corresponding amides. The sequence is that of Low-molecular weight cobalt-containing nitrile hydratase subunit alpha from Rhodococcus rhodochrous.